Here is a 66-residue protein sequence, read N- to C-terminus: MPKMKTHRGSAKRFKKTASGKLKRGHAYTSHLFANKTKKQKRHLRKATLVSPGDFKRIRQMLDNLK.

Basic residues predominate over residues 1–26; it reads MPKMKTHRGSAKRFKKTASGKLKRGH. The disordered stretch occupies residues 1 to 29; it reads MPKMKTHRGSAKRFKKTASGKLKRGHAYT.

Belongs to the bacterial ribosomal protein bL35 family.

This Geobacillus kaustophilus (strain HTA426) protein is Large ribosomal subunit protein bL35.